The primary structure comprises 874 residues: Probable inorganic carbon transporter subunit DabA (874 aa).

The Zn(2+) site is built by C398, D400, H580, and C595.

Belongs to the inorganic carbon transporter (TC 9.A.2) DabA family. As to quaternary structure, forms a complex with DabB. The cofactor is Zn(2+).

The protein resides in the cell membrane. Functionally, part of an energy-coupled inorganic carbon pump. This is Probable inorganic carbon transporter subunit DabA from Bacillus cereus (strain Q1).